The chain runs to 129 residues: Protein HMF1 (129 aa).

Residue Lys52 forms a Glycyl lysine isopeptide (Lys-Gly) (interchain with G-Cter in ubiquitin) linkage.

It belongs to the RutC family.

The protein localises to the cytoplasm. Its subcellular location is the nucleus. It is found in the mitochondrion intermembrane space. This Saccharomyces cerevisiae (strain ATCC 204508 / S288c) (Baker's yeast) protein is Protein HMF1 (HMF1).